We begin with the raw amino-acid sequence, 158 residues long: NADH-quinone oxidoreductase subunit B 2 (158 aa).

Cys-37, Cys-38, Cys-102, and Cys-132 together coordinate [4Fe-4S] cluster.

It belongs to the complex I 20 kDa subunit family. NDH-1 is composed of 14 different subunits. Subunits NuoB, C, D, E, F, and G constitute the peripheral sector of the complex. It depends on [4Fe-4S] cluster as a cofactor.

Its subcellular location is the cell inner membrane. The enzyme catalyses a quinone + NADH + 5 H(+)(in) = a quinol + NAD(+) + 4 H(+)(out). Its function is as follows. NDH-1 shuttles electrons from NADH, via FMN and iron-sulfur (Fe-S) centers, to quinones in the respiratory chain. Couples the redox reaction to proton translocation (for every two electrons transferred, four hydrogen ions are translocated across the cytoplasmic membrane), and thus conserves the redox energy in a proton gradient. The protein is NADH-quinone oxidoreductase subunit B 2 of Nitrosospira multiformis (strain ATCC 25196 / NCIMB 11849 / C 71).